Reading from the N-terminus, the 262-residue chain is Dihydroorotate dehydrogenase B (NAD(+)), electron transfer subunit (262 aa).

Residues 3–104 (KLQEMMTIVS…MGPLGNGFPV (102 aa)) form the FAD-binding FR-type domain. Residues 53–56 (RPIS), 70–72 (LYR), and 79–80 (GT) contribute to the FAD site. 4 residues coordinate [2Fe-2S] cluster: cysteine 226, cysteine 231, cysteine 234, and cysteine 249.

It belongs to the PyrK family. Heterotetramer of 2 PyrK and 2 PyrD type B subunits. The cofactor is [2Fe-2S] cluster. FAD serves as cofactor.

It functions in the pathway pyrimidine metabolism; UMP biosynthesis via de novo pathway; orotate from (S)-dihydroorotate (NAD(+) route): step 1/1. Functionally, responsible for channeling the electrons from the oxidation of dihydroorotate from the FMN redox center in the PyrD type B subunit to the ultimate electron acceptor NAD(+). The chain is Dihydroorotate dehydrogenase B (NAD(+)), electron transfer subunit from Lactococcus lactis subsp. lactis (strain IL1403) (Streptococcus lactis).